Consider the following 111-residue polypeptide: Phosphoribosyl-AMP cyclohydrolase (111 aa).

Aspartate 80 is a binding site for Mg(2+). Zn(2+) is bound at residue cysteine 81. Mg(2+) contacts are provided by aspartate 82 and aspartate 84. Residues cysteine 97 and cysteine 104 each coordinate Zn(2+).

The protein belongs to the PRA-CH family. As to quaternary structure, homodimer. Mg(2+) is required as a cofactor. The cofactor is Zn(2+).

It localises to the cytoplasm. The enzyme catalyses 1-(5-phospho-beta-D-ribosyl)-5'-AMP + H2O = 1-(5-phospho-beta-D-ribosyl)-5-[(5-phospho-beta-D-ribosylamino)methylideneamino]imidazole-4-carboxamide. Its pathway is amino-acid biosynthesis; L-histidine biosynthesis; L-histidine from 5-phospho-alpha-D-ribose 1-diphosphate: step 3/9. Catalyzes the hydrolysis of the adenine ring of phosphoribosyl-AMP. The sequence is that of Phosphoribosyl-AMP cyclohydrolase from Mycobacterium ulcerans (strain Agy99).